Here is a 320-residue protein sequence, read N- to C-terminus: Glutathione synthetase (320 aa).

Residues 133-317 form the ATP-grasp domain; it reads KMYTLQFAAV…LGEKVICWLE (185 aa). Position 159-215 (159-215) interacts with ATP; sequence LEEHGAAVLKPLGGKAGEGILFLDPGDRNFNSLVEISTQHGKEPVMVQRFLPEAKEG. 2 residues coordinate Mg(2+): Glu288 and Asn290.

This sequence belongs to the prokaryotic GSH synthase family. Mg(2+) is required as a cofactor. The cofactor is Mn(2+).

The enzyme catalyses gamma-L-glutamyl-L-cysteine + glycine + ATP = glutathione + ADP + phosphate + H(+). The protein operates within sulfur metabolism; glutathione biosynthesis; glutathione from L-cysteine and L-glutamate: step 2/2. This chain is Glutathione synthetase, found in Synechocystis sp. (strain ATCC 27184 / PCC 6803 / Kazusa).